We begin with the raw amino-acid sequence, 264 residues long: MIKVPRFICMIALTSGILASGLSQSVSAHTEKSEPSSTYHFHSDPLLYLAPPPTSGSPLQAHDDQTFNSTRQLKGSTRWALATQDADLHLASVLKDYACAAGMNLDIAQLPHLANLIKRALRTEYDDIGRAKNNWNRKRPFVDTDQPICTEKDREGLGKQGSYPSGHTTIGWSVALILAELIPDHAANILQRGQIFGTSRIVCGAHWFSDVQAGYIMASGEIAALHGDADFRRDMELARKELEKARTSAHTPDDLLCKIEQSAR.

Residues 1–28 (MIKVPRFICMIALTSGILASGLSQSVSA) form the signal peptide.

Belongs to the class A bacterial acid phosphatase family. It depends on Mg(2+) as a cofactor. Zn(2+) serves as cofactor.

The protein resides in the periplasm. It carries out the reaction a phosphate monoester + H2O = an alcohol + phosphate. The sequence is that of Acid phosphatase (phoC) from Zymomonas mobilis subsp. mobilis (strain ATCC 31821 / ZM4 / CP4).